Here is a 347-residue protein sequence, read N- to C-terminus: MEGIFAAYVLPALIIALKSVVLLVVLLIVVAYLLYADRKIWAAVQLRRGPNVVGPWGLFQAFADLLKFVFKEPIIPSGANKGVFLLAPFISAVLAMATWAVIPVNEGWAVANINVGILYIFAISSLEVYGVIMGGWASNSKYPFLGALRSAAQMVSYEVSIGFVIVTVLLTVGSLNLTDIVLSQNTGLGTMLGLPASFLDWNWLCLFPMFVVFFISALAETNRPPFDLVEAESELVAGHMIEYSSTPFLLFFLGEYVAITLMCALMTVLFLGGWLPPVDVWFLSWVPGIIWFMLKLCFCFFLFAMVKAFVPRYRYDQLMRLGWKVFLPISLFMVVATATFLKVFGLA.

A run of 9 helical transmembrane segments spans residues 13–33 (LIIA…VAYL), 50–70 (PNVV…KFVF), 82–102 (GVFL…WAVI), 115–135 (VGIL…IMGG), 161–181 (IGFV…TDIV), 198–218 (FLDW…ISAL), 248–268 (FLLF…LMTV), 286–306 (VPGI…FAMV), and 325–345 (VFLP…KVFG).

Belongs to the complex I subunit 1 family. In terms of assembly, NDH-1 is composed of 14 different subunits. Subunits NuoA, H, J, K, L, M, N constitute the membrane sector of the complex.

Its subcellular location is the cell inner membrane. The catalysed reaction is a quinone + NADH + 5 H(+)(in) = a quinol + NAD(+) + 4 H(+)(out). Functionally, NDH-1 shuttles electrons from NADH, via FMN and iron-sulfur (Fe-S) centers, to quinones in the respiratory chain. The immediate electron acceptor for the enzyme in this species is believed to be ubiquinone. Couples the redox reaction to proton translocation (for every two electrons transferred, four hydrogen ions are translocated across the cytoplasmic membrane), and thus conserves the redox energy in a proton gradient. This subunit may bind ubiquinone. The chain is NADH-quinone oxidoreductase subunit H from Brucella abortus (strain 2308).